Here is a 376-residue protein sequence, read N- to C-terminus: General transcription factor IIH subunit 2 (376 aa).

One can recognise a VWFA domain in the interval 64–206 (HVMIVIDCSR…NIRCSAIGLS (143 aa)). A C4-type zinc finger spans residues 286 to 303 (CTQCGARHCSIPAECPVC).

It belongs to the GTF2H2 family. In terms of assembly, component of the 7-subunit TFIIH core complex composed of xpb-1, xpd-1, gtf-2H1, gtf-2H2C, gtf-2H3, Y73F8A.24 and gtf-2H5, which is active in NER. The core complex associates with the 3-subunit CDK-activating kinase (CAK) module composed of cyh-1, cdk-7 and mnat-1 to form the 10-subunit holoenzyme (holo-TFIIH) active in transcription.

The protein resides in the nucleus. Its function is as follows. Component of the general transcription and DNA repair factor IIH (TFIIH) core complex, which is involved in general and transcription-coupled nucleotide excision repair (NER) of damaged DNA and, when complexed to CAK, in RNA transcription by RNA polymerase II. In NER, TFIIH acts by opening DNA around the lesion to allow the excision of the damaged oligonucleotide and its replacement by a new DNA fragment. In transcription, TFIIH has an essential role in transcription initiation. When the pre-initiation complex (PIC) has been established, TFIIH is required for promoter opening and promoter escape. Phosphorylation of the C-terminal tail (CTD) of the largest subunit of RNA polymerase II by the kinase module CAK controls the initiation of transcription. This Caenorhabditis elegans protein is General transcription factor IIH subunit 2.